The primary structure comprises 421 residues: Imidazolonepropionase (421 aa).

Fe(3+) is bound by residues His-80 and His-82. 2 residues coordinate Zn(2+): His-80 and His-82. 4-imidazolone-5-propanoate is bound by residues Arg-89, Tyr-152, and His-185. Tyr-152 is an N-formimidoyl-L-glutamate binding site. Fe(3+) is bound at residue His-249. His-249 contributes to the Zn(2+) binding site. Glu-252 provides a ligand contact to 4-imidazolone-5-propanoate. A Fe(3+)-binding site is contributed by Asp-324. Asp-324 contacts Zn(2+). N-formimidoyl-L-glutamate-binding residues include Asn-326 and Gly-328. Ser-329 lines the 4-imidazolone-5-propanoate pocket.

The protein belongs to the metallo-dependent hydrolases superfamily. HutI family. Homodimer. Zn(2+) is required as a cofactor. Fe(3+) serves as cofactor.

It is found in the cytoplasm. The enzyme catalyses 4-imidazolone-5-propanoate + H2O = N-formimidoyl-L-glutamate. It functions in the pathway amino-acid degradation; L-histidine degradation into L-glutamate; N-formimidoyl-L-glutamate from L-histidine: step 3/3. Its function is as follows. Catalyzes the hydrolytic cleavage of the carbon-nitrogen bond in imidazolone-5-propanoate to yield N-formimidoyl-L-glutamate. It is the third step in the universal histidine degradation pathway. In Bacillus subtilis (strain 168), this protein is Imidazolonepropionase.